Here is an 82-residue protein sequence, read N- to C-terminus: Small ribosomal subunit protein bS16 (82 aa).

The protein belongs to the bacterial ribosomal protein bS16 family.

This chain is Small ribosomal subunit protein bS16, found in Aeromonas salmonicida (strain A449).